Here is a 293-residue protein sequence, read N- to C-terminus: Cbb3-type cytochrome c oxidase subunit FixP (293 aa).

Residues 1 to 11 (MSTSHESHHAP) are compositionally biased toward basic and acidic residues. The interval 1–25 (MSTSHESHHAPVDGAGGPSTTGHEW) is disordered. A helical membrane pass occupies residues 43–63 (FYATIIWAFGYWVAYPAWPLV). 2 Cytochrome c domains span residues 114–201 (LARA…RSLS) and 209–290 (PAAK…HTLG). Heme c is bound by residues C127, C130, H131, M178, C222, C225, H226, and M267.

It belongs to the CcoP / FixP family. As to quaternary structure, component of the cbb3-type cytochrome c oxidase at least composed of FixN, FixO, FixQ and FixP. Heme c serves as cofactor.

The protein localises to the cell inner membrane. Its pathway is energy metabolism; oxidative phosphorylation. C-type cytochrome. Part of the cbb3-type cytochrome c oxidase complex. FixP subunit is required for transferring electrons from donor cytochrome c via its heme groups to FixO subunit. From there, electrons are shuttled to the catalytic binuclear center of FixN subunit where oxygen reduction takes place. The complex also functions as a proton pump. This is Cbb3-type cytochrome c oxidase subunit FixP from Azorhizobium caulinodans (strain ATCC 43989 / DSM 5975 / JCM 20966 / LMG 6465 / NBRC 14845 / NCIMB 13405 / ORS 571).